An 87-amino-acid chain; its full sequence is Small polypeptide DEVIL 11 (87 aa).

Residues 1–11 (MASSSSLTRSG) are compositionally biased toward polar residues. The disordered stretch occupies residues 1-47 (MASSSSLTRSGSVHLDEKWKLSKKDGGASRITRSSSTSSSSFNGKKQ). Residues 14 to 27 (HLDEKWKLSKKDGG) show a composition bias toward basic and acidic residues. A compositionally biased stretch (low complexity) spans 29–41 (SRITRSSSTSSSS). Residues 51–82 (AFTRKCARLVKEQRARFYIMRRCVIMLICWRD) form a required for DVL/RTFL small polypeptide activity region. Residues 64–80 (RARFYIMRRCVIMLICW) traverse the membrane as a helical segment. A glycan (N-linked (GlcNAc...) asparagine) is linked at Asn83.

Belongs to the DVL/RTFL small polypeptides family.

The protein localises to the cell membrane. In terms of biological role, small polypeptide acting as a regulatory molecule which coordinates cellular responses required for differentiation, growth and development, probably by restricting polar cell proliferation in lateral organs and coordinating socket cell recruitment and differentiation at trichome sites. The polypeptide is Small polypeptide DEVIL 11 (Arabidopsis thaliana (Mouse-ear cress)).